A 469-amino-acid chain; its full sequence is Trehalose-6-phosphate synthase (469 aa).

R10 contributes to the D-glucose 6-phosphate binding site. 22–23 provides a ligand contact to UDP-alpha-D-glucose; that stretch reads GG. D-glucose 6-phosphate contacts are provided by Y77 and D131. UDP-alpha-D-glucose contacts are provided by R262 and K267. R300 is a D-glucose 6-phosphate binding site. 365–369 provides a ligand contact to UDP-alpha-D-glucose; that stretch reads LVAKE.

This sequence belongs to the glycosyltransferase 20 family. In terms of assembly, homotetramer.

It catalyses the reaction D-glucose 6-phosphate + UDP-alpha-D-glucose = alpha,alpha-trehalose 6-phosphate + UDP + H(+). It functions in the pathway glycan biosynthesis; trehalose biosynthesis. Functionally, probably involved in the osmoprotection via the biosynthesis of trehalose. Catalyzes the transfer of glucose from UDP-alpha-D-glucose (UDP-Glc) to D-glucose 6-phosphate (Glc-6-P) to form trehalose-6-phosphate. Acts with retention of the anomeric configuration of the UDP-sugar donor. The protein is Trehalose-6-phosphate synthase of Sodalis glossinidius (strain morsitans).